The following is a 494-amino-acid chain: UDP-N-acetylmuramate--L-alanine ligase (494 aa).

ATP is bound at residue 140-146; sequence GTHGKTT.

The protein belongs to the MurCDEF family.

The protein resides in the cytoplasm. It carries out the reaction UDP-N-acetyl-alpha-D-muramate + L-alanine + ATP = UDP-N-acetyl-alpha-D-muramoyl-L-alanine + ADP + phosphate + H(+). It participates in cell wall biogenesis; peptidoglycan biosynthesis. Functionally, cell wall formation. This chain is UDP-N-acetylmuramate--L-alanine ligase, found in Nostoc sp. (strain PCC 7120 / SAG 25.82 / UTEX 2576).